The sequence spans 487 residues: MFYLCTTLYFKQFTFMSTELFSTLPYKVADITLADFGRKEIDLAEKEMPGLMALREKYGESKPLKGARIMGSLHMTIQTAVLIETLVALGAEVRWCSCNIYSTQDHAAAAIAASGVAVFAWKGETLADYWWCTLQALNFEGGKGPTVIVDDGGDATMMIHVGYEAENNAAVLDKEVHAEDEIELNAILKKVLAEDKERWHRVAAEVRGVSEETTTGVHRLYQMQEEGKLLFPAFNVNDSVTKSKFDNLYGCRESLADGIKRATDVMIAGKVVVVCGYGDVGKGCSHSMRSYGARVLVTEVDPICALQAAMEGFEVVTMEDACKEGNIFVTTTGNIDIIRIDHMEQMKDQAIVCNIGHFDNEIQVDALKHYPGIKRVNIKPQVDRYYFPDGHSIILLADGRLVNLGCATGHPSFVMSNSFTNQTLAQIELFNKKYDINVYRLPKHLDEEVARLHLEKIGVKLTKLTPEQAAYIGVSVDGPYKADHYRY.

Substrate-binding residues include Thr76, Asp151, and Glu212. 213–215 (TTT) provides a ligand contact to NAD(+). Substrate-binding residues include Lys242 and Asp246. NAD(+)-binding positions include Asn247, 276–281 (GYGDVG), Glu299, Asn334, 355–357 (IGH), and Asn403.

The protein belongs to the adenosylhomocysteinase family. Requires NAD(+) as cofactor.

It localises to the cytoplasm. The catalysed reaction is S-adenosyl-L-homocysteine + H2O = L-homocysteine + adenosine. Its pathway is amino-acid biosynthesis; L-homocysteine biosynthesis; L-homocysteine from S-adenosyl-L-homocysteine: step 1/1. May play a key role in the regulation of the intracellular concentration of adenosylhomocysteine. This chain is Adenosylhomocysteinase, found in Bacteroides fragilis (strain YCH46).